Reading from the N-terminus, the 285-residue chain is Pseudouridine-5'-phosphate glycosidase (285 aa).

E17 serves as the catalytic Proton donor. Positions 77 and 97 each coordinate substrate. Position 126 (D126) interacts with Mn(2+). 128 to 130 (SQD) is a binding site for substrate. K147 (nucleophile) is an active-site residue.

Belongs to the pseudouridine-5'-phosphate glycosidase family. In terms of assembly, homotrimer. Mn(2+) serves as cofactor.

The catalysed reaction is D-ribose 5-phosphate + uracil = psi-UMP + H2O. Catalyzes the reversible cleavage of pseudouridine 5'-phosphate (PsiMP) to ribose 5-phosphate and uracil. Functions biologically in the cleavage direction, as part of a pseudouridine degradation pathway. The protein is Pseudouridine-5'-phosphate glycosidase of Thermotoga sp. (strain RQ2).